A 726-amino-acid chain; its full sequence is ORC ubiquitin ligase 1 (726 aa).

The RING-type; degenerate zinc-finger motif lies at 18–56 (CHICLGKVRQPVICINNHVFCSICIDLWLKNNSQCPACR). 2 coiled-coil regions span residues 87 to 129 (LRKT…TILD) and 155 to 270 (ETVA…MNSI). Phosphoserine is present on Ser-210. Disordered regions lie at residues 276-334 (SADG…TSKA) and 436-460 (NVSNKDSSEDDISRSENEKKSECFS). Residues 280–290 (KGSKGSEEDVV) show a composition bias toward basic and acidic residues. Residues 304 to 318 (SSTSSSSHLAKPSSS) are compositionally biased toward low complexity. Over residues 319 to 334 (RLCDTSSARQESTSKA) the composition is skewed to polar residues. Residues 446-457 (DISRSENEKKSE) show a composition bias toward basic and acidic residues. Ser-526, Ser-553, Ser-561, Ser-568, and Ser-570 each carry phosphoserine. Disordered regions lie at residues 570–602 (SSQGSEFLEEPDKLEEKTELNLSKGSLTNDQLE) and 687–726 (QSPWSTSFVPEKRNKNVNQSTKRKIQSSLSSASPSKATKS). A compositionally biased stretch (basic and acidic residues) spans 579–588 (EPDKLEEKTE). The segment covering 589 to 602 (LNLSKGSLTNDQLE) has biased composition (polar residues). A compositionally biased stretch (low complexity) spans 713 to 726 (SSLSSASPSKATKS). Residues Ser-719 and Ser-721 each carry the phosphoserine modification.

Associates with ORC complex. Binds to chromatin; association is cell cycle-regulated, absent from mitotic chromosomes, is associated with chromatin from G1 and partially released from chromatin from mid S-phase. In terms of processing, auto-ubiquitinated.

The protein resides in the chromosome. It carries out the reaction S-ubiquitinyl-[E2 ubiquitin-conjugating enzyme]-L-cysteine + [acceptor protein]-L-lysine = [E2 ubiquitin-conjugating enzyme]-L-cysteine + N(6)-ubiquitinyl-[acceptor protein]-L-lysine.. E3 ubiquitin ligase essential for DNA replication origin activation during S phase. Acts as a replication origin selector which selects the origins to be fired and catalyzes the multi-mono-ubiquitination of a subset of chromatin-bound ORC3 and ORC5 during S-phase. This is ORC ubiquitin ligase 1 from Homo sapiens (Human).